The chain runs to 730 residues: Catalase-peroxidase (730 aa).

The disordered stretch occupies residues 1–25 (MEEKKCPVTGHTQHTPTGGGTKNKD). Residues 95-218 (WHSAGTYRLN…LAAVQMGLIY (124 aa)) constitute a cross-link (tryptophyl-tyrosyl-methioninium (Trp-Tyr) (with M-244)). The Proton acceptor role is filled by H96. The segment at residues 218-244 (YVNPEGPNGQPSVLASGRDVRDTFKRM) is a cross-link (tryptophyl-tyrosyl-methioninium (Tyr-Met) (with W-95)). Position 259 (H259) interacts with heme b.

Belongs to the peroxidase family. Peroxidase/catalase subfamily. In terms of assembly, homodimer or homotetramer. Heme b serves as cofactor. In terms of processing, formation of the three residue Trp-Tyr-Met cross-link is important for the catalase, but not the peroxidase activity of the enzyme.

The catalysed reaction is H2O2 + AH2 = A + 2 H2O. It catalyses the reaction 2 H2O2 = O2 + 2 H2O. Functionally, bifunctional enzyme with both catalase and broad-spectrum peroxidase activity. This is Catalase-peroxidase from Desulfitobacterium hafniense (strain Y51).